Here is a 170-residue protein sequence, read N- to C-terminus: Cysteine-rich venom protein VAR4 (170 aa).

Residues 1–22 (MILLKLYLTLAAILCQSRGTTS) form the signal peptide. An SCP domain is found at 41-169 (NKHNDLRRTV…PLKYFLVCQY (129 aa)). 3 disulfides stabilise this stretch: Cys-77–Cys-156, Cys-95–Cys-170, and Cys-151–Cys-167.

It belongs to the CRISP family. Contains 8 disulfide bonds. In terms of tissue distribution, expressed by the venom gland.

It localises to the secreted. In terms of biological role, blocks ryanodine receptors, and potassium channels. The polypeptide is Cysteine-rich venom protein VAR4 (Varanus acanthurus (Ridge-tailed monitor)).